The chain runs to 120 residues: MSRFLEDLRSLSSAEEFFSFLGVEFNPKVVQVNRLHILKKYQTYLKACDAEENGESVSRETHKRCLERAYADFLTSDARSEKLFKVFQSEAGKAFVGLDAILPLAAAERSESKVNSSAEA.

This sequence belongs to the NifW family. Homotrimer; associates with NifD.

May protect the nitrogenase Fe-Mo protein from oxidative damage. This chain is Nitrogenase-stabilizing/protective protein NifW, found in Rhodospirillum rubrum (strain ATCC 11170 / ATH 1.1.1 / DSM 467 / LMG 4362 / NCIMB 8255 / S1).